A 127-amino-acid chain; its full sequence is Biogenesis of lysosome-related organelles complex 1 subunit 2 (127 aa).

Belongs to the BLOC1S2 family. In terms of assembly, component of the biogenesis of lysosome-related organelles complex-1 (BLOC-1). Interacts with BLOS1 and SNX1.

It is found in the cytoplasm. Its subcellular location is the endosome. In terms of biological role, component of the biogenesis of lysosome-related organelles complex-1 (BLOC-1), a complex that mediates the vacuolar degradative transport via the intracellular vesicle trafficking from the endosome to the vacuole. The sequence is that of Biogenesis of lysosome-related organelles complex 1 subunit 2 (BLOS2) from Arabidopsis thaliana (Mouse-ear cress).